Reading from the N-terminus, the 380-residue chain is Epoxyqueuosine reductase (380 aa).

Catalysis depends on aspartate 134, which acts as the Proton donor. Positions 178 to 208 (FPPDKPIEDQCGGCTKCIDICPTGALIQGGQ) constitute a 4Fe-4S ferredoxin-type 1 domain. 8 residues coordinate [4Fe-4S] cluster: cysteine 188, cysteine 191, cysteine 194, cysteine 198, cysteine 214, cysteine 240, cysteine 243, and cysteine 247. Residues 226–258 (PEEYRDKIGNRIYGCDTCQTVCPKNKGMDFHNH) enclose the 4Fe-4S ferredoxin-type 2 domain.

This sequence belongs to the QueG family. As to quaternary structure, monomer. The cofactor is cob(II)alamin. [4Fe-4S] cluster serves as cofactor.

Its subcellular location is the cytoplasm. The catalysed reaction is epoxyqueuosine(34) in tRNA + AH2 = queuosine(34) in tRNA + A + H2O. It functions in the pathway tRNA modification; tRNA-queuosine biosynthesis. In terms of biological role, catalyzes the conversion of epoxyqueuosine (oQ) to queuosine (Q), which is a hypermodified base found in the wobble positions of tRNA(Asp), tRNA(Asn), tRNA(His) and tRNA(Tyr). This chain is Epoxyqueuosine reductase, found in Bacillus cereus (strain ATCC 14579 / DSM 31 / CCUG 7414 / JCM 2152 / NBRC 15305 / NCIMB 9373 / NCTC 2599 / NRRL B-3711).